Reading from the N-terminus, the 60-residue chain is Waprin-Lio1 (60 aa).

An N-terminal signal peptide occupies residues 1–8; it reads MLLGTTSA. Positions 9-59 constitute a WAP domain; it reads QVVRPGSCPNVDVPIPPLGLCRTTCQTDANCQEGRKCCKNGCGFMTCETAR. 4 disulfide bridges follow: C16-C46, C29-C50, C33-C45, and C39-C55.

This sequence belongs to the venom waprin family. As to expression, expressed by the venom gland.

The protein resides in the secreted. In terms of biological role, damages membranes of susceptible bacteria. Has no hemolytic activity. Not toxic to mice. Does not inhibit the proteinases elastase and cathepsin G. In Erythrolamprus poecilogyrus (Water snake), this protein is Waprin-Lio1.